The primary structure comprises 313 residues: Acetyl-coenzyme A carboxylase carboxyl transferase subunit beta, chloroplastic (313 aa).

The 267-residue stretch at 47–313 (LWTRCDNCEN…SAPCRRSNNS (267 aa)) folds into the CoA carboxyltransferase N-terminal domain. The Zn(2+) site is built by cysteine 51, cysteine 54, cysteine 70, and cysteine 73. The segment at 51 to 73 (CDNCENMLYIRFLRQNKRICEEC) adopts a C4-type zinc-finger fold.

This sequence belongs to the AccD/PCCB family. Acetyl-CoA carboxylase is a heterohexamer composed of biotin carboxyl carrier protein, biotin carboxylase and 2 subunits each of ACCase subunit alpha and ACCase plastid-coded subunit beta (accD). Zn(2+) serves as cofactor.

The protein resides in the plastid. It localises to the chloroplast stroma. It catalyses the reaction N(6)-carboxybiotinyl-L-lysyl-[protein] + acetyl-CoA = N(6)-biotinyl-L-lysyl-[protein] + malonyl-CoA. It participates in lipid metabolism; malonyl-CoA biosynthesis; malonyl-CoA from acetyl-CoA: step 1/1. Its function is as follows. Component of the acetyl coenzyme A carboxylase (ACC) complex. Biotin carboxylase (BC) catalyzes the carboxylation of biotin on its carrier protein (BCCP) and then the CO(2) group is transferred by the transcarboxylase to acetyl-CoA to form malonyl-CoA. The sequence is that of Acetyl-coenzyme A carboxylase carboxyl transferase subunit beta, chloroplastic from Anthoceros angustus (Hornwort).